Here is a 423-residue protein sequence, read N- to C-terminus: Methylenetetrahydrofolate--tRNA-(uracil-5-)-methyltransferase TrmFO 2 (423 aa).

An FAD-binding site is contributed by 8-13 (GAGLSG).

This sequence belongs to the MnmG family. TrmFO subfamily. The cofactor is FAD.

The protein localises to the cytoplasm. The catalysed reaction is uridine(54) in tRNA + (6R)-5,10-methylene-5,6,7,8-tetrahydrofolate + NADH + H(+) = 5-methyluridine(54) in tRNA + (6S)-5,6,7,8-tetrahydrofolate + NAD(+). It catalyses the reaction uridine(54) in tRNA + (6R)-5,10-methylene-5,6,7,8-tetrahydrofolate + NADPH + H(+) = 5-methyluridine(54) in tRNA + (6S)-5,6,7,8-tetrahydrofolate + NADP(+). Catalyzes the folate-dependent formation of 5-methyl-uridine at position 54 (M-5-U54) in all tRNAs. The chain is Methylenetetrahydrofolate--tRNA-(uracil-5-)-methyltransferase TrmFO 2 from Mycoplasma capricolum subsp. capricolum (strain California kid / ATCC 27343 / NCTC 10154).